The following is a 696-amino-acid chain: Equisetin cluster transcription factor eqxF (696 aa).

2 disordered regions span residues 1-24 (MADQVQDVHPMEWGPGKTPQGRAR) and 73-117 (NQEQ…PADY).

Its subcellular location is the nucleus. In terms of biological role, transcription factor that regulates the expression of the gene cluster that mediates the biosynthesis of Equisetin. The sequence is that of Equisetin cluster transcription factor eqxF from Fusarium heterosporum.